Consider the following 117-residue polypeptide: Envelope glycoprotein J (117 aa).

The N-terminal stretch at 1-26 (MRSLLFVVGAWVAAAVTHLTPNAALA) is a signal peptide. Residues 26–64 (ATGTTPTVGANSTADPGTGANGTTVPAAGTPANSTTAAE) are disordered. Polar residues predominate over residues 27-40 (TGTTPTVGANSTAD). Topologically, residues 27–73 (TGTTPTVGANSTADPGTGANGTTVPAAGTPANSTTAAETPAPFPPVD) are extracellular. Asn-36, Asn-46, and Asn-58 each carry an N-linked (GlcNAc...) asparagine; by host glycan. A helical transmembrane segment spans residues 74 to 94 (FALPVVIGGLCALTLAAMGAG). Topologically, residues 95–117 (ALLHRCCRRAAARRRQRAAYVYA) are cytoplasmic.

The protein belongs to the alphaherpesvirinae glycoprotein J family.

Its subcellular location is the host Golgi apparatus membrane. It localises to the host endoplasmic reticulum membrane. The protein localises to the host endosome membrane. In terms of biological role, inhibits host cell apoptosis. Induces an increase in reactive oxygen species (ROS) in the host cell. In Homo sapiens (Human), this protein is Envelope glycoprotein J (gJ).